A 271-amino-acid chain; its full sequence is Uridine-cytidine kinase 1-A (271 aa).

24–32 (GGTASGKST) provides a ligand contact to ATP. Asp-81, Tyr-109, His-114, Arg-163, Arg-172, and Gln-180 together coordinate substrate. ATP is bound at residue Asp-209. The segment at 241-271 (SQKRTFPGQGESGGLILPGKRTHLESSSRPH) is disordered. Basic and acidic residues predominate over residues 262-271 (THLESSSRPH).

It belongs to the uridine kinase family.

It catalyses the reaction uridine + ATP = UMP + ADP + H(+). The enzyme catalyses cytidine + ATP = CMP + ADP + H(+). Its pathway is pyrimidine metabolism; CTP biosynthesis via salvage pathway; CTP from cytidine: step 1/3. It participates in pyrimidine metabolism; UMP biosynthesis via salvage pathway; UMP from uridine: step 1/1. In terms of biological role, phosphorylates uridine and cytidine to uridine monophosphate and cytidine monophosphate. Does not phosphorylate deoxyribonucleosides or purine ribonucleosides. Can use ATP or GTP as a phosphate donor. This chain is Uridine-cytidine kinase 1-A (uck1-a), found in Xenopus laevis (African clawed frog).